A 257-amino-acid polypeptide reads, in one-letter code: 1-(5-phosphoribosyl)-5-[(5-phosphoribosylamino)methylideneamino] imidazole-4-carboxamide isomerase (257 aa).

Belongs to the HisA/HisF family.

Its subcellular location is the cytoplasm. The enzyme catalyses 1-(5-phospho-beta-D-ribosyl)-5-[(5-phospho-beta-D-ribosylamino)methylideneamino]imidazole-4-carboxamide = 5-[(5-phospho-1-deoxy-D-ribulos-1-ylimino)methylamino]-1-(5-phospho-beta-D-ribosyl)imidazole-4-carboxamide. It functions in the pathway amino-acid biosynthesis; L-histidine biosynthesis; L-histidine from 5-phospho-alpha-D-ribose 1-diphosphate: step 4/9. This Neurospora crassa (strain ATCC 24698 / 74-OR23-1A / CBS 708.71 / DSM 1257 / FGSC 987) protein is 1-(5-phosphoribosyl)-5-[(5-phosphoribosylamino)methylideneamino] imidazole-4-carboxamide isomerase (his-7).